We begin with the raw amino-acid sequence, 44 residues long: Small hydrophobic protein (44 aa).

Over 1–16 the chain is Intravirion; that stretch reads MLPDPEDPESKKATRR. A helical; Signal-anchor for type II membrane protein transmembrane segment spans residues 17 to 37; the sequence is AGNLIICFLFIFFLFVTFIVP. The Virion surface portion of the chain corresponds to 38–44; it reads TLRHLLS.

Belongs to the rubulavirus small hydrophobic protein family.

The protein resides in the virion membrane. It is found in the host cell membrane. Inhibits TNF-alpha signaling and seems to block apoptosis in host infected cells. The protein is Small hydrophobic protein (SH) of Parainfluenza virus 5 (strain W3) (PIV5).